The chain runs to 517 residues: Ubiquitin carboxyl-terminal hydrolase 30 (517 aa).

Over 1-35 (MLSSRAQAARTAADKALQRFLRTGAAVRYKVMKNW) the chain is Mitochondrial intermembrane. A helical transmembrane segment spans residues 36-56 (GVIGGIAAALAAGIYVIWGPI). Topologically, residues 57–517 (TERKKRRKGL…QQGREYRSEE (461 aa)) are cytoplasmic. Residues 68–502 (PGLVNLGNTC…SAYLLFYERV (435 aa)) form the USP domain. Cys77 acts as the Nucleophile in catalysis. The tract at residues 198-221 (MAPRQVTCHTRGSPHPTTNHWKSQ) is disordered. Polar residues predominate over residues 204-218 (TCHTRGSPHPTTNHW). Glycyl lysine isopeptide (Lys-Gly) (interchain with G-Cter in ubiquitin) cross-links involve residues Lys235 and Lys289. The tract at residues 364 to 395 (SQHGPKATENPGSAPEVQDAQAAPKPGLSQPG) is disordered. His452 (proton acceptor) is an active-site residue.

It belongs to the peptidase C19 family. In terms of processing, ubiquitinated by parkin (PRKN) at Lys-235 and Lys-289, leading to its degradation.

It is found in the mitochondrion outer membrane. The catalysed reaction is Thiol-dependent hydrolysis of ester, thioester, amide, peptide and isopeptide bonds formed by the C-terminal Gly of ubiquitin (a 76-residue protein attached to proteins as an intracellular targeting signal).. With respect to regulation, inhibited by the diterpenoid derivative 15-oxospiramilactone (S3). Functionally, deubiquitinating enzyme tethered to the mitochondrial outer membrane that acts as a key inhibitor of mitophagy by counteracting the action of parkin (PRKN): hydrolyzes ubiquitin attached by parkin on target proteins, such as RHOT1/MIRO1 and TOMM20, thereby blocking parkin's ability to drive mitophagy. Preferentially cleaves 'Lys-6'- and 'Lys-11'-linked polyubiquitin chains, 2 types of linkage that participate in mitophagic signaling. Does not cleave efficiently polyubiquitin phosphorylated at 'Ser-65'. Acts as negative regulator of mitochondrial fusion by mediating deubiquitination of MFN1 and MFN2. In Mus musculus (Mouse), this protein is Ubiquitin carboxyl-terminal hydrolase 30 (Usp30).